We begin with the raw amino-acid sequence, 307 residues long: Dihydroorotate dehydrogenase B (NAD(+)), catalytic subunit (307 aa).

Residues serine 22 and 46–47 (KT) contribute to the FMN site. Substrate is bound by residues lysine 46, 70–74 (NAVGL), and asparagine 128. Asparagine 128 is a binding site for FMN. The active-site Nucleophile is cysteine 131. 2 residues coordinate FMN: lysine 166 and isoleucine 192. Substrate is bound at residue 193–194 (NT). FMN contacts are provided by residues glycine 218, 244–245 (GG), and 266–267 (GT).

This sequence belongs to the dihydroorotate dehydrogenase family. Type 1 subfamily. As to quaternary structure, heterotetramer of 2 PyrK and 2 PyrD type B subunits. Requires FMN as cofactor.

Its subcellular location is the cytoplasm. The enzyme catalyses (S)-dihydroorotate + NAD(+) = orotate + NADH + H(+). It functions in the pathway pyrimidine metabolism; UMP biosynthesis via de novo pathway; orotate from (S)-dihydroorotate (NAD(+) route): step 1/1. Its function is as follows. Catalyzes the conversion of dihydroorotate to orotate with NAD(+) as electron acceptor. The sequence is that of Dihydroorotate dehydrogenase B (NAD(+)), catalytic subunit (pyrD) from Desulforudis audaxviator (strain MP104C).